We begin with the raw amino-acid sequence, 498 residues long: Tryptophan decarboxylase TDC2 (498 aa).

Lys-316 is subject to N6-(pyridoxal phosphate)lysine.

It belongs to the group II decarboxylase family. Requires pyridoxal 5'-phosphate as cofactor.

It carries out the reaction L-tryptophan + H(+) = tryptamine + CO2. Functionally, involved in the biosynthesis of tryptamine. Supplies tryptamine for the indole moiety of camptothecin (CPT), an anti-cancer monoterpene alkaloid. Represents a key step in monoterpene indole alkaloid biosynthesis. Is specific for tryptophan, and inactive against tyrosine, phenylalanine and 3,4-dihydroxyphenylalanine (dopa). The polypeptide is Tryptophan decarboxylase TDC2 (Camptotheca acuminata (Happy tree)).